Consider the following 377-residue polypeptide: DNA-directed RNA polymerase subunit alpha (377 aa).

An alpha N-terminal domain (alpha-NTD) region spans residues 1 to 259 (MSDSSHNLLY…KHFSVFEKMD (259 aa)). The tract at residues 276-377 (KDDILHKLVL…KIRSSKNTKG (102 aa)) is alpha C-terminal domain (alpha-CTD).

This sequence belongs to the RNA polymerase alpha chain family. Homodimer. The RNAP catalytic core consists of 2 alpha, 1 beta, 1 beta' and 1 omega subunit. When a sigma factor is associated with the core the holoenzyme is formed, which can initiate transcription.

The enzyme catalyses RNA(n) + a ribonucleoside 5'-triphosphate = RNA(n+1) + diphosphate. DNA-dependent RNA polymerase catalyzes the transcription of DNA into RNA using the four ribonucleoside triphosphates as substrates. The polypeptide is DNA-directed RNA polymerase subunit alpha (Chlamydia trachomatis serovar D (strain ATCC VR-885 / DSM 19411 / UW-3/Cx)).